The sequence spans 311 residues: tRNA dimethylallyltransferase (311 aa).

Position 13 to 20 (Gly13 to Thr20) interacts with ATP. Thr15–Thr20 provides a ligand contact to substrate. Interaction with substrate tRNA regions lie at residues Asp38–Gln41 and Gln166–Arg170.

The protein belongs to the IPP transferase family. Monomer. Mg(2+) is required as a cofactor.

The catalysed reaction is adenosine(37) in tRNA + dimethylallyl diphosphate = N(6)-dimethylallyladenosine(37) in tRNA + diphosphate. Functionally, catalyzes the transfer of a dimethylallyl group onto the adenine at position 37 in tRNAs that read codons beginning with uridine, leading to the formation of N6-(dimethylallyl)adenosine (i(6)A). The protein is tRNA dimethylallyltransferase of Staphylococcus aureus (strain bovine RF122 / ET3-1).